A 200-amino-acid polypeptide reads, in one-letter code: LexA repressor (200 aa).

The H-T-H motif DNA-binding region spans 28-48 (RAEIAEILGFKSANAAEEHLK). Catalysis depends on for autocatalytic cleavage activity residues serine 118 and lysine 155.

The protein belongs to the peptidase S24 family. In terms of assembly, homodimer.

It carries out the reaction Hydrolysis of Ala-|-Gly bond in repressor LexA.. Functionally, represses a number of genes involved in the response to DNA damage (SOS response), including recA and lexA. In the presence of single-stranded DNA, RecA interacts with LexA causing an autocatalytic cleavage which disrupts the DNA-binding part of LexA, leading to derepression of the SOS regulon and eventually DNA repair. This is LexA repressor from Teredinibacter turnerae (strain ATCC 39867 / T7901).